The primary structure comprises 283 residues: Thymidylate synthase (283 aa).

Arg-22 contributes to the dUMP binding site. Catalysis depends on Cys-160, which acts as the Nucleophile. Residues 180-183, Asn-191, and 221-223 contribute to the dUMP site; these read RSCD and HIY. Residue Asp-183 participates in (6R)-5,10-methylene-5,6,7,8-tetrahydrofolate binding. Residue Ser-282 participates in (6R)-5,10-methylene-5,6,7,8-tetrahydrofolate binding.

The protein belongs to the thymidylate synthase family. Bacterial-type ThyA subfamily. As to quaternary structure, homodimer.

The protein resides in the cytoplasm. It catalyses the reaction dUMP + (6R)-5,10-methylene-5,6,7,8-tetrahydrofolate = 7,8-dihydrofolate + dTMP. Its pathway is pyrimidine metabolism; dTTP biosynthesis. Functionally, catalyzes the reductive methylation of 2'-deoxyuridine-5'-monophosphate (dUMP) to 2'-deoxythymidine-5'-monophosphate (dTMP) while utilizing 5,10-methylenetetrahydrofolate (mTHF) as the methyl donor and reductant in the reaction, yielding dihydrofolate (DHF) as a by-product. This enzymatic reaction provides an intracellular de novo source of dTMP, an essential precursor for DNA biosynthesis. The sequence is that of Thymidylate synthase from Mannheimia succiniciproducens (strain KCTC 0769BP / MBEL55E).